We begin with the raw amino-acid sequence, 511 residues long: Phosphoenolpyruvate carboxylase (511 aa).

This sequence belongs to the PEPCase type 2 family. Homotetramer. Requires Mg(2+) as cofactor.

The catalysed reaction is oxaloacetate + phosphate = phosphoenolpyruvate + hydrogencarbonate. Its function is as follows. Catalyzes the irreversible beta-carboxylation of phosphoenolpyruvate (PEP) to form oxaloacetate (OAA), a four-carbon dicarboxylic acid source for the tricarboxylic acid cycle. The polypeptide is Phosphoenolpyruvate carboxylase (Saccharolobus islandicus (strain M.16.27) (Sulfolobus islandicus)).